The primary structure comprises 154 residues: Transcriptional repressor NrdR (154 aa).

A zinc finger spans residues 3–34 (CPTCQYNGTRVVDSRPADDGNSIRRRRECEKC). Positions 49 to 139 (LIVVKKDGAR…VYRQFKDISV (91 aa)) constitute an ATP-cone domain.

This sequence belongs to the NrdR family. Zn(2+) serves as cofactor.

Functionally, negatively regulates transcription of bacterial ribonucleotide reductase nrd genes and operons by binding to NrdR-boxes. The protein is Transcriptional repressor NrdR of Listeria monocytogenes serotype 4a (strain HCC23).